The sequence spans 301 residues: Prestalk A differentiation protein A (301 aa).

This sequence belongs to the NmrA-type oxidoreductase family.

Involved in development and cell differentiation. The chain is Prestalk A differentiation protein A (padA) from Dictyostelium discoideum (Social amoeba).